The sequence spans 265 residues: RING finger protein 208 (265 aa).

The segment at 83-106 (MPTLEGASHTPPLPRRPRKGSSEL) is disordered. Phosphoserine is present on S103. Residues 147–194 (CPTCGHTYNVTQRRPRVLSCLHSVCEQCLQILYESCPKYKFISCPTCH) form an RING-type zinc finger.

In Mus musculus (Mouse), this protein is RING finger protein 208 (Rnf208).